A 275-amino-acid polypeptide reads, in one-letter code: Dermonecrotic toxin LhSicTox-alphaVI1ii (275 aa).

His-5 is a catalytic residue. Glu-25 and Asp-27 together coordinate Mg(2+). His-41 serves as the catalytic Nucleophile. Cystine bridges form between Cys-45–Cys-51 and Cys-47–Cys-192. Mg(2+) is bound at residue Asp-85.

This sequence belongs to the arthropod phospholipase D family. Class II subfamily. It depends on Mg(2+) as a cofactor. As to expression, expressed by the venom gland.

Its subcellular location is the secreted. The enzyme catalyses an N-(acyl)-sphingosylphosphocholine = an N-(acyl)-sphingosyl-1,3-cyclic phosphate + choline. It catalyses the reaction an N-(acyl)-sphingosylphosphoethanolamine = an N-(acyl)-sphingosyl-1,3-cyclic phosphate + ethanolamine. The catalysed reaction is a 1-acyl-sn-glycero-3-phosphocholine = a 1-acyl-sn-glycero-2,3-cyclic phosphate + choline. It carries out the reaction a 1-acyl-sn-glycero-3-phosphoethanolamine = a 1-acyl-sn-glycero-2,3-cyclic phosphate + ethanolamine. Dermonecrotic toxins cleave the phosphodiester linkage between the phosphate and headgroup of certain phospholipids (sphingolipid and lysolipid substrates), forming an alcohol (often choline) and a cyclic phosphate. This toxin acts on sphingomyelin (SM). It may also act on ceramide phosphoethanolamine (CPE), lysophosphatidylcholine (LPC) and lysophosphatidylethanolamine (LPE), but not on lysophosphatidylserine (LPS), and lysophosphatidylglycerol (LPG). It acts by transphosphatidylation, releasing exclusively cyclic phosphate products as second products. Induces dermonecrosis, hemolysis, increased vascular permeability, edema, inflammatory response, and platelet aggregation. This chain is Dermonecrotic toxin LhSicTox-alphaVI1ii, found in Loxosceles hirsuta (Recluse spider).